The chain runs to 529 residues: Peptide chain release factor 3 (529 aa).

Positions 11-280 (SKRRTFAIIS…GLVAWAPAPM (270 aa)) constitute a tr-type G domain. GTP-binding positions include 20–27 (SHPDAGKT), 88–92 (DTPGH), and 142–145 (NKLD).

This sequence belongs to the TRAFAC class translation factor GTPase superfamily. Classic translation factor GTPase family. PrfC subfamily.

The protein localises to the cytoplasm. Increases the formation of ribosomal termination complexes and stimulates activities of RF-1 and RF-2. It binds guanine nucleotides and has strong preference for UGA stop codons. It may interact directly with the ribosome. The stimulation of RF-1 and RF-2 is significantly reduced by GTP and GDP, but not by GMP. This Pectobacterium carotovorum subsp. carotovorum (strain PC1) protein is Peptide chain release factor 3.